The following is a 64-amino-acid chain: DNA-binding protein 7d (64 aa).

Residues K5, K7, K61, K63, and K64 each carry the N6-methyllysine modification.

The protein belongs to the 7 kDa DNA-binding/endoribonuclease P2 family. Monomer.

It is found in the cytoplasm. Its function is as follows. Can constrain negative DNA supercoils. May be involved in maintaining the integrity of the genome at high temperature. Stimulates the Holliday junction cleavage activity of Hjc. The chain is DNA-binding protein 7d (sso7d) from Saccharolobus solfataricus (strain ATCC 35092 / DSM 1617 / JCM 11322 / P2) (Sulfolobus solfataricus).